The sequence spans 206 residues: Putative archaetidylserine decarboxylase proenzyme (206 aa).

The active-site Schiff-base intermediate with substrate; via pyruvic acid is the Ser172. Pyruvic acid (Ser); by autocatalysis is present on Ser172.

Belongs to the phosphatidylserine decarboxylase family. PSD-A subfamily. As to quaternary structure, heterodimer of a large membrane-associated beta subunit and a small pyruvoyl-containing alpha subunit. Requires pyruvate as cofactor. In terms of processing, is synthesized initially as an inactive proenzyme. Formation of the active enzyme involves a self-maturation process in which the active site pyruvoyl group is generated from an internal serine residue via an autocatalytic post-translational modification. Two non-identical subunits are generated from the proenzyme in this reaction, and the pyruvate is formed at the N-terminus of the alpha chain, which is derived from the carboxyl end of the proenzyme. The post-translation cleavage follows an unusual pathway, termed non-hydrolytic serinolysis, in which the side chain hydroxyl group of the serine supplies its oxygen atom to form the C-terminus of the beta chain, while the remainder of the serine residue undergoes an oxidative deamination to produce ammonia and the pyruvoyl prosthetic group on the alpha chain.

The protein resides in the cell membrane. The enzyme catalyses archaetidylserine + H(+) = archaetidylethanolamine + CO2. In terms of biological role, catalyzes the formation of archaetidylethanolamine (PtdEtn) from archaetidylserine (PtdSer). In Methanocaldococcus jannaschii (strain ATCC 43067 / DSM 2661 / JAL-1 / JCM 10045 / NBRC 100440) (Methanococcus jannaschii), this protein is Putative archaetidylserine decarboxylase proenzyme.